Here is a 512-residue protein sequence, read N- to C-terminus: Serine--tRNA ligase, cytoplasmic (512 aa).

Met1 bears the N-acetylmethionine mark. Residues 9–61 (RVDKGGDPALIRETQEKRFKDPGLVDQLVKADSEWRRCRFRADNLNKLKNLCS) are interaction with tRNA. At Ser241 the chain carries Phosphoserine. 2 residues coordinate L-serine: Thr271 and Arg302. ATP is bound by residues 302–304 (RQE) and 318–321 (VHQF). At Lys323 the chain carries N6-acetyllysine. Glu325 is an L-serine binding site. Residue 391 to 394 (ELVS) coordinates ATP. 2 residues coordinate L-serine: Asn427 and Thr429. Positions 472–512 (KPAPIDQEPSKKQKKQHEGSKKKAKEVTLESQLQNMEVTEA) are disordered. Residues 479-499 (EPSKKQKKQHEGSKKKAKEVT) are compositionally biased toward basic and acidic residues. A Nuclear localization signal motif is present at residues 482–494 (KKQKKQHEGSKKK). Residues 500–512 (LESQLQNMEVTEA) show a composition bias toward polar residues.

This sequence belongs to the class-II aminoacyl-tRNA synthetase family. Type-1 seryl-tRNA synthetase subfamily. As to quaternary structure, homodimer. The tRNA molecule may bind across the dimer. Interacts with SIRT2. Interacts with METTL6; interaction is required for the tRNA N(3)-methylcytidine methyltransferase activity of METTL6.

It is found in the cytoplasm. The protein resides in the nucleus. The enzyme catalyses tRNA(Ser) + L-serine + ATP = L-seryl-tRNA(Ser) + AMP + diphosphate + H(+). It catalyses the reaction tRNA(Sec) + L-serine + ATP = L-seryl-tRNA(Sec) + AMP + diphosphate + H(+). It participates in aminoacyl-tRNA biosynthesis; selenocysteinyl-tRNA(Sec) biosynthesis; L-seryl-tRNA(Sec) from L-serine and tRNA(Sec): step 1/1. Its function is as follows. Catalyzes the attachment of serine to tRNA(Ser) in a two-step reaction: serine is first activated by ATP to form Ser-AMP and then transferred to the acceptor end of tRNA(Ser). Is probably also able to aminoacylate tRNA(Sec) with serine, to form the misacylated tRNA L-seryl-tRNA(Sec), which will be further converted into selenocysteinyl-tRNA(Sec). In the nucleus, binds to the VEGFA core promoter and prevents MYC binding and transcriptional activation by MYC. Recruits SIRT2 to the VEGFA promoter, promoting deacetylation of histone H4 at 'Lys-16' (H4K16). Thereby, inhibits the production of VEGFA and sprouting angiogenesis mediated by VEGFA. This is Serine--tRNA ligase, cytoplasmic (SARS1) from Cricetulus griseus (Chinese hamster).